A 214-amino-acid polypeptide reads, in one-letter code: Thymidylate kinase (214 aa).

An ATP-binding site is contributed by 10-17 (GPDGAGKT).

Belongs to the thymidylate kinase family.

The enzyme catalyses dTMP + ATP = dTDP + ADP. Functionally, phosphorylation of dTMP to form dTDP in both de novo and salvage pathways of dTTP synthesis. This Limosilactobacillus fermentum (strain NBRC 3956 / LMG 18251) (Lactobacillus fermentum) protein is Thymidylate kinase.